Consider the following 75-residue polypeptide: Xibalbin-13 2 (75 aa).

The N-terminal stretch at 1-27 is a signal peptide; it reads MKEANTRRYIYLCLVVVLLSIIITTEA. A propeptide spanning residues 28–30 is cleaved from the precursor; it reads EDD. Disulfide bonds link cysteine 34/cysteine 49, cysteine 41/cysteine 54, cysteine 48/cysteine 65, and cysteine 56/cysteine 63.

The protein belongs to the xibalbin-13 family. In terms of tissue distribution, expressed by the venom gland and the whole body.

Its subcellular location is the secreted. Its function is as follows. Probable neurotoxin. Strongly inhibits voltage-gated potassium channels (Kv1.1/KCNA1, Kv1.2/KCNA2, Kv1.3/KCNA3, and Kv1.6/KCNA6, with the highest toxicity against Kv1.1 (85.1% inhibition at 1 uM)) and mildly inhibits sodium channels (Nav1.2/SCN2A, Nav1.4/SCN4A, Nav1.5/SCN5A, Nav1.6/SCN8A, and BgNav). Induces activation of protein kinase A type II (PKA-II) and MAP kinase Erk1/2 in primary nociceptive and non-nociceptive sensory neurons. Does not show cytotoxic activity. Does not have an impact on Ca2+, cAMP, and NO signaling in the cell types analyzed. Does not interfere with the adhesion of leukocytes to endothelial cells. This is Xibalbin-13 2 from Xibalbanus tulumensis (Blind cave remipede).